The following is a 157-amino-acid chain: 2-C-methyl-D-erythritol 2,4-cyclodiphosphate synthase (157 aa).

Positions 8 and 10 each coordinate a divalent metal cation. 4-CDP-2-C-methyl-D-erythritol 2-phosphate-binding positions include 8–10 (DVH) and 34–35 (HS). A divalent metal cation is bound at residue His-42. 4-CDP-2-C-methyl-D-erythritol 2-phosphate is bound by residues 56–58 (DIG), 132–135 (TTNE), and Arg-142.

It belongs to the IspF family. As to quaternary structure, homotrimer. Requires a divalent metal cation as cofactor.

It catalyses the reaction 4-CDP-2-C-methyl-D-erythritol 2-phosphate = 2-C-methyl-D-erythritol 2,4-cyclic diphosphate + CMP. The protein operates within isoprenoid biosynthesis; isopentenyl diphosphate biosynthesis via DXP pathway; isopentenyl diphosphate from 1-deoxy-D-xylulose 5-phosphate: step 4/6. Functionally, involved in the biosynthesis of isopentenyl diphosphate (IPP) and dimethylallyl diphosphate (DMAPP), two major building blocks of isoprenoid compounds. Catalyzes the conversion of 4-diphosphocytidyl-2-C-methyl-D-erythritol 2-phosphate (CDP-ME2P) to 2-C-methyl-D-erythritol 2,4-cyclodiphosphate (ME-CPP) with a corresponding release of cytidine 5-monophosphate (CMP). The sequence is that of 2-C-methyl-D-erythritol 2,4-cyclodiphosphate synthase from Chlorobaculum parvum (strain DSM 263 / NCIMB 8327) (Chlorobium vibrioforme subsp. thiosulfatophilum).